The chain runs to 243 residues: Large ribosomal subunit protein uL2 (243 aa).

Positions 1–12 (MGRRIQGQRRGR) are enriched in basic residues. 2 disordered regions span residues 1-38 (MGRR…SDDT) and 198-243 (VDHP…GSSE). Basic and acidic residues-rich tracts occupy residues 24-34 (YKAELSHKQSE) and 221-231 (PPGRKVGDIAS).

It belongs to the universal ribosomal protein uL2 family. Part of the 50S ribosomal subunit. Forms a bridge to the 30S subunit in the 70S ribosome.

In terms of biological role, one of the primary rRNA binding proteins. Required for association of the 30S and 50S subunits to form the 70S ribosome, for tRNA binding and peptide bond formation. It has been suggested to have peptidyltransferase activity; this is somewhat controversial. Makes several contacts with the 16S rRNA in the 70S ribosome. This Haloquadratum walsbyi (strain DSM 16790 / HBSQ001) protein is Large ribosomal subunit protein uL2.